A 239-amino-acid chain; its full sequence is Metallo-beta-lactamase IND-1 (239 aa).

The signal sequence occupies residues 1–20 (MKKSIRFFIVSILLSPFASA). Positions 96, 98, 100, 159, and 178 each coordinate Zn(2+). Lysine 181 contributes to the a beta-lactam binding site. Histidine 220 serves as a coordination point for Zn(2+).

The protein belongs to the metallo-beta-lactamase superfamily. Class-B beta-lactamase family. As to quaternary structure, monomer. Zn(2+) is required as a cofactor.

It is found in the periplasm. The enzyme catalyses a beta-lactam + H2O = a substituted beta-amino acid. Inhibited by chelating agents such as EDTA. Not susceptible to inactivation by the beta-lactamase-blocking agent clavulanic acid. In terms of biological role, class B beta-lactamase which confers resistance to the beta-lactam antibiotics, including penicillins, cephalosporins and carbapenems. Acts via hydrolysis of the beta-lactam ring. Has penicillin-, cephalosporin- and carbapenem-hydrolyzing activities. In Chryseobacterium indologenes (Flavobacterium indologenes), this protein is Metallo-beta-lactamase IND-1.